The primary structure comprises 382 residues: Mannan endo-1,4-beta-mannosidase (382 aa).

A signal peptide spans 1–19 (MVKLFSFLLLVWVASPAFS). Residues Trp-83, Asn-144, 147–151 (WDESK), and Asn-180 each bind substrate. Glu-181 (proton donor/acceptor) is an active-site residue. Substrate contacts are provided by Gln-187, Gln-204, Trp-208, Trp-243, Tyr-282, and His-284. A disulfide bridge connects residues Cys-195 and Cys-262. Glu-312 functions as the Nucleophile in the catalytic mechanism. Cysteines 317 and 349 form a disulfide. Residues Trp-341 and Asp-348 each coordinate substrate. Residues 346–350 (GGDCS) are involved in stabilization of the transition state.

This sequence belongs to the glycosyl hydrolase 5 (cellulase A) family. In terms of assembly, monomer.

It localises to the secreted. The enzyme catalyses Random hydrolysis of (1-&gt;4)-beta-D-mannosidic linkages in mannans, galactomannans and glucomannans.. Its activity is regulated as follows. Activated particularly by Ca(2+) and Zn(2+), and to a lesser extent by Na(+), K(+), Mg(2+) and Cu(2+). Activation effect of the divalent metal ions Ca(2+), Zn(2+), Mg(2+) and Cu(2+) is reduced significantly by the addition of EDTA. Strongly inhibited by Mn(2+), Hg(2+) and Ag(+). Its function is as follows. Hydrolyzes 1,4-beta linked polysaccharide backbones of mannans. Has high activity toward locust bean gum. Also active toward konjac and beta-1,4-mannan. Hydrolyzes mannotetraose (M4) and mannopentaose (M5) to mannobiose (M2) and mannotriose (M3) with a little production of mannose (M1). Hydrolyzes beta-1,4-mannan to M2, M3 and M4. Hardly hydrolyzes M2 and M3. Does not hydrolyze p-nitrophenyl-beta-D-mannopyranoside, gua-gum, carboxymethyl cellulose, soluble starch or laminarin. This is Mannan endo-1,4-beta-mannosidase from Cryptopygus antarcticus (Antarctic springtail).